Reading from the N-terminus, the 266-residue chain is Undecaprenyl-diphosphatase (266 aa).

The next 8 membrane-spanning stretches (helical) occupy residues 1-21 (MDTF…FLPI), 39-59 (QGLS…VMYF), 87-107 (WWII…KGFI), 111-131 (LRNI…LWWA), 144-164 (VGWK…IPGT), 183-203 (AAAR…AILV), 218-238 (ALGL…HYFL), and 246-266 (MTPF…FIFL).

It belongs to the UppP family.

It is found in the cell inner membrane. The catalysed reaction is di-trans,octa-cis-undecaprenyl diphosphate + H2O = di-trans,octa-cis-undecaprenyl phosphate + phosphate + H(+). In terms of biological role, catalyzes the dephosphorylation of undecaprenyl diphosphate (UPP). Confers resistance to bacitracin. In Shewanella piezotolerans (strain WP3 / JCM 13877), this protein is Undecaprenyl-diphosphatase.